The sequence spans 165 residues: V-type proton ATPase subunit c2 (165 aa).

Residues 1–12 (MASTFSGDETAP) are Lumenal-facing. Residues 13-33 (FFGFLGAAAALVFSCMGAAYG) traverse the membrane as a helical segment. Residues 34–55 (TAKSGVGVASMGVMRPELVMKS) lie on the Cytoplasmic side of the membrane. Residues 56-76 (IVPVVMAGVLGIYGLIIAVII) form a helical membrane-spanning segment. Residues 77–95 (STGINPKAKSYYLFDGYAH) lie on the Lumenal side of the membrane. Residues 96 to 117 (LSSGLACGLAGLSAGMAIGIVG) form a helical membrane-spanning segment. Topologically, residues 118–129 (DAGVRANAQQPK) are cytoplasmic. The chain crosses the membrane as a helical span at residues 130 to 155 (LFVGMILILIFAEALALYGLIVGIIL). The Lumenal segment spans residues 156 to 165 (SSRAGQSRAE).

This sequence belongs to the V-ATPase proteolipid subunit family. As to quaternary structure, V-ATPase is a heteromultimeric enzyme composed of a peripheral catalytic V1 complex (components A to H) attached to an integral membrane V0 proton pore complex (components: a, c, c'', d and e). The proteolipid components c and c'' are present as a hexameric ring that forms the proton-conducting pore. In terms of tissue distribution, expressed in leaf, root, flower and silique, with lower expression in roots.

The protein localises to the vacuole membrane. Its function is as follows. Proton-conducting pore forming subunit of the membrane integral V0 complex of vacuolar ATPase. V-ATPase is responsible for acidifying a variety of intracellular compartments in eukaryotic cells. The protein is V-type proton ATPase subunit c2 (VHA-c2) of Arabidopsis thaliana (Mouse-ear cress).